The sequence spans 153 residues: MVSRVILNLQLVCANTQGIPANNKIKLWIKKIFFSSKKKIELTIRIVDIQEMLYLNWYYLGKKYPTNVLSFPFEPPSEIQTSLLGDIVICKQIIEYENRKNNIFSDVHWAHMIIHGSLHLLGYDHICDEDAELMNAMELNIIRTLGYKTCCFL.

H115, H119, and H125 together coordinate Zn(2+).

The protein belongs to the endoribonuclease YbeY family. Zn(2+) is required as a cofactor.

Its subcellular location is the cytoplasm. In terms of biological role, single strand-specific metallo-endoribonuclease involved in late-stage 70S ribosome quality control and in maturation of the 3' terminus of the 16S rRNA. This chain is Endoribonuclease YbeY, found in Blochmanniella floridana.